The following is a 1401-amino-acid chain: Lysine-specific demethylase 6A (1401 aa).

The tract at residues 1 to 1095 (MKSCGVSLAT…TNIDLSDDKK (1095 aa)) is interaction with SUPT6H. TPR repeat units follow at residues 95–128 (SDFF…QSDY), 132–165 (AAFL…DPSF), 169–203 (KEIH…NPCT), 207–240 (AEIQ…ENLS), 245–285 (ATIL…DPNS), 286–319 (GQSW…SEAS), 321–353 (DTWC…DHGH), and 355–387 (AAWM…KNCS). Residues 439 to 453 (AMNTAQQNTSDNWSG) are compositionally biased toward polar residues. The tract at residues 439 to 463 (AMNTAQQNTSDNWSGGNAPPPVEQQ) is disordered. Omega-N-methylarginine is present on residues R519 and R549. 3 stretches are compositionally biased toward polar residues: residues 596-606 (NHVTGSGSNGN), 619-642 (HNRT…STQG), and 660-743 (LSST…STAS). Positions 596–745 (NHVTGSGSNG…ETPNSTASVE (150 aa)) are disordered. Phosphoserine is present on S769. Disordered stretches follow at residues 795–863 (GTCD…EESQ), 914–941 (LLDK…PPTP), and 1043–1080 (FQES…GPFK). Residues 814–833 (SVASSPSSAISTATPSPKST) are compositionally biased toward low complexity. Position 827 is a phosphothreonine (T827). S829 is subject to Phosphoserine. Over residues 834 to 848 (EQTTTNSVTSLNSPH) the composition is skewed to polar residues. The segment covering 918–931 (CPPPRPPSSPYPPL) has biased composition (pro residues). The span at 1046-1063 (SLREENEKRSHHKDHSDS) shows a compositional bias: basic and acidic residues. Residues 1095–1258 (KWKLQLHELT…YKLAVERYEW (164 aa)) enclose the JmjC domain. Fe cation contacts are provided by H1146, E1148, and H1226. Residues C1331, C1334, C1358, and C1361 each coordinate Zn(2+).

The protein belongs to the UTX family. As to quaternary structure, component of the MLL2/3 complex (also named ASCOM complex), at least composed of KMT2D/MLL2 or KMT2C/MLL3, ASH2L, RBBP5, WDR5, NCOA6, DPY30, KDM6A (or KDM6B), PAXIP1/PTIP, PAGR1 and alpha- and beta-tubulin. Interacts with TLE1. Interacts with SUPT6H. Interacts with SMARCA4. Interacts with PROSER1. L-ascorbate is required as a cofactor. The cofactor is Fe(2+). Expressed in brain, heart and spleen.

It is found in the nucleus. The enzyme catalyses N(6),N(6),N(6)-trimethyl-L-lysyl(27)-[histone H3] + 2 2-oxoglutarate + 2 O2 = N(6)-methyl-L-lysyl(27)-[histone H3] + 2 formaldehyde + 2 succinate + 2 CO2. Functionally, histone demethylase that specifically demethylates 'Lys-27' of histone H3, thereby playing a central role in histone code. Demethylates trimethylated and dimethylated but not monomethylated H3 'Lys-27'. Plays a central role in regulation of posterior development, by regulating HOX gene expression. Demethylation of 'Lys-27' of histone H3 is concomitant with methylation of 'Lys-4' of histone H3, and regulates the recruitment of the PRC1 complex and monoubiquitination of histone H2A. Plays a demethylase-independent role in chromatin remodeling to regulate T-box family member-dependent gene expression. The polypeptide is Lysine-specific demethylase 6A (Kdm6a) (Mus musculus (Mouse)).